Reading from the N-terminus, the 361-residue chain is tRNA-specific 2-thiouridylase MnmA (361 aa).

ATP-binding positions include G10–S17 and M36. C104 functions as the Nucleophile in the catalytic mechanism. A disulfide bridge connects residues C104 and C202. G128 is a binding site for ATP. Residues K152–Q154 are interaction with tRNA. Catalysis depends on C202, which acts as the Cysteine persulfide intermediate. The segment at R308–Y309 is interaction with tRNA.

Belongs to the MnmA/TRMU family.

It is found in the cytoplasm. It catalyses the reaction S-sulfanyl-L-cysteinyl-[protein] + uridine(34) in tRNA + AH2 + ATP = 2-thiouridine(34) in tRNA + L-cysteinyl-[protein] + A + AMP + diphosphate + H(+). Functionally, catalyzes the 2-thiolation of uridine at the wobble position (U34) of tRNA, leading to the formation of s(2)U34. The sequence is that of tRNA-specific 2-thiouridylase MnmA from Clostridioides difficile (strain 630) (Peptoclostridium difficile).